A 204-amino-acid polypeptide reads, in one-letter code: Prephenate decarboxylase (204 aa).

The protein belongs to the prephenate decarboxylase family.

Its subcellular location is the cytoplasm. The catalysed reaction is prephenate + H(+) = 3-[(4R)-4-hydroxycyclohexa-1,5-dien-1-yl]-2-oxopropanoate + CO2. The protein operates within antibiotic biosynthesis; bacilysin biosynthesis. In terms of biological role, part of the bacABCDEF operon responsible for the biosynthesis of the nonribosomally synthesized dipeptide antibiotic bacilysin, composed of L-alanine and L-anticapsin. Bacilysin is an irreversible inactivator of the glutaminase domain of glucosamine synthetase. BacA is an unusual prephenate decarboxylase that avoids the typical aromatization of the cyclohexadienol ring of prephenate. BacA catalyzes the protonation of prephenate (1-carboxy-4-hydroxy-alpha-oxo-2,5-cyclohexadiene-1-propanoic acid) at C6 position, followed by a decarboxylation to produce the endocyclic-delta(4),delta(8)-7R-dihydro-hydroxyphenylpyruvate (en-H2HPP). En-H2HPP is able to undergo a slow nonenzymatic isomerization to produce the exocyclic-delta(3),delta(5)-dihydro-hydroxyphenylpyruvate (ex-H2HPP). BacA isomerizes only the pro-R double bond in prephenate. This Bacillus subtilis protein is Prephenate decarboxylase.